The following is a 387-amino-acid chain: BarH-like 2 homeobox protein (387 aa).

3 disordered regions span residues 1–145, 157–240, and 367–387; these read MTME…FLIK, CAPY…TAFS, and PGGQ…PHPR. The segment covering 7-24 has biased composition (polar residues); that stretch reads SGSSFGIDTILSSASSGS. Residues 100–113 are compositionally biased toward low complexity; sequence APTQSLQPLPQQQQ. Residues 114 to 126 show a composition bias toward pro residues; sequence PLPPQQPPPPPPQ. Residues 127–141 show a composition bias toward low complexity; that stretch reads QLGSAASAPRTSTSS. Positions 160–178 are enriched in polar residues; that stretch reads YSTSVSSPHHTPKQESNAV. Positions 180–220 are enriched in basic and acidic residues; the sequence is ESFRPKLEQEDSKTKLDKREDSQSDIKCHGTKEEGDREITS. A DNA-binding region (homeobox) is located at residues 232-291; the sequence is PRKARTAFSDHQLNQLERSFERQKYLSVQDRMDLAAALNLTDTQVKTWYQNRRTKWKRQT.

This sequence belongs to the BAR homeobox family.

It localises to the nucleus. Its function is as follows. Potential regulator of neural basic helix-loop-helix genes. This is BarH-like 2 homeobox protein (BARHL2) from Homo sapiens (Human).